Here is a 536-residue protein sequence, read N- to C-terminus: CRISPR-associated DNA-binding protein Cas12m (536 aa).

The recognition domain (REC1-N) stretch occupies residues 1–59 (MPFGKKARHVKAYQFGADAPQEGMEAVLEQHRLRTDYYNALVEMELRQREERTALLANL). Residues 60–105 (AAESGLESPNQVYERLKAAGEKGIRKHPEYVAARERQKALYGHPRL) form a recognition domain (REC2) region. A recognition domain (REC1-C) region spans residues 106-159 (LELQSRQREERNALRRSFGAKGLYSSNYLDVERAFDKARQSPELRFRRYSPHEG). The interval 160–257 (RLAVLYTEGL…RWTVSVVVEV (98 aa)) is wedge domain (WED). The interval 258–270 (EGPPVASPTGRGA) is linker. The ruvC-I stretch occupies residues 271–481 (VAVDLGWRRV…QRGKPVRKLN (211 aa)). A target nucleic-acid binding (TNB) region spans residues 482-516 (PAHTTTDCHACGGALVGDPAKELRLYCPTCERFYD). The Zn(2+) site is built by Cys-489, Cys-492, Cys-508, and Cys-511. Positions 517-536 (QDENAARNLLRRAQEVQAQV) are ruvC-II. Asp-518 contacts Mg(2+).

This sequence belongs to the CRISPR-associated DNA-binding protein Cas12m family. Mg(2+) serves as cofactor. It depends on Zn(2+) as a cofactor.

Its activity is regulated as follows. Pre-crRNA processing is inhibited by EDTA. In terms of biological role, CRISPR (clustered regularly interspaced short palindromic repeat), is an adaptive immune system that provides protection against mobile genetic elements (viruses, transposable elements and conjugative plasmids). CRISPR clusters contain sequences complementary to antecedent mobile elements and target invading nucleic acids. CRISPR clusters are transcribed and processed into CRISPR RNA (crRNA). Recognizes a short motif in the CRISPR repeat sequences (the 5' PAM or protospacer adjacent motif, 5'-TT/CN-3' in this organism) to help distinguish self versus nonself, as targets within the bacterial CRISPR locus do not have PAMs. Cas12m-crRNA binds DNA in a PAM-dependent, crRNA-guided fashion. DNA-binding probably inhibits transcription, leading to gene silencing. No dsDNA, ssDNA or RNA nuclease activity is seen for the crRNA-Cas12m complex. Upon expression in E.coli as a CRISPR region preferentially binds to its associated crRNA. Is required to process pre-crRNA to mature crRNA without a tracrRNA; processing is Mg(2+)-dependent and does not require the predicted RuvC domain catalytic site. The chain is CRISPR-associated DNA-binding protein Cas12m from Allomeiothermus silvanus (strain ATCC 700542 / DSM 9946 / NBRC 106475 / NCIMB 13440 / VI-R2) (Thermus silvanus).